A 630-amino-acid chain; its full sequence is PAN2-PAN3 deadenylation complex subunit PAN3 (630 aa).

The segment at 7 to 36 (SAKDTLCKNILIYGYCKFENKGCAFSHHKP) adopts a C3H1-type zinc-finger fold. Disordered regions lie at residues 38 to 72 (VGQP…PSFQ) and 135 to 171 (GFGS…QSSG). Low complexity predominate over residues 44-56 (SASSSSGYSGNSS). Polar residues predominate over residues 140 to 149 (YPSSPNTSGA). Residues 231-501 (QTLPRSNLPE…LDRFSQRYLT (271 aa)) form a pseudokinase domain region. ATP is bound by residues R283, 333–340 (DYFPNSST), and 388–389 (TK). The stretch at 502-540 (TRLFSTINNLEDSTDFMESQITTELENARLFRLLTKLNF) forms a coiled coil. A knob domain region spans residues 541–630 (IIDRPEAKDW…DSVFRNLTRD (90 aa)).

This sequence belongs to the protein kinase superfamily. PAN3 family. In terms of assembly, homodimer. Forms a heterotrimer with a catalytic subunit PAN2 to form the poly(A)-nuclease (PAN) deadenylation complex. Interacts (via PAM-2 motif) with poly(A)-binding protein PAB1 (via PABC domain), conferring substrate specificity of the enzyme complex.

Its subcellular location is the cytoplasm. Functionally, regulatory subunit of the poly(A)-nuclease (PAN) deadenylation complex, one of two cytoplasmic mRNA deadenylases involved in mRNA turnover. PAN specifically shortens poly(A) tails of RNA and the activity is stimulated by poly(A)-binding protein PAB1. PAN deadenylation is followed by rapid degradation of the shortened mRNA tails by the CCR4-NOT complex. Deadenylated mRNAs are then degraded by two alternative mechanisms, namely exosome-mediated 3'-5' exonucleolytic degradation, or deadenylation-dependent mRNA decaping and subsequent 5'-3' exonucleolytic degradation by XRN1. May also be involved in post-transcriptional maturation of mRNA poly(A) tails. PAN3 acts as a positive regulator for PAN activity, recruiting the catalytic subunit PAN2 to mRNA via its interaction with RNA and with PAB1. This Scheffersomyces stipitis (strain ATCC 58785 / CBS 6054 / NBRC 10063 / NRRL Y-11545) (Yeast) protein is PAN2-PAN3 deadenylation complex subunit PAN3.